A 500-amino-acid chain; its full sequence is Intracellular exo-alpha-(1-&gt;5)-L-arabinofuranosidase 1 (500 aa).

The alpha-L-arabinofuranose site is built by Glu27, Asn72, and Asn172. The active-site Proton donor/acceptor is the Glu173. Alpha-L-arabinofuranose-binding residues include Tyr244, Glu292, and Gln349. Glu292 acts as the Nucleophile in catalysis.

This sequence belongs to the glycosyl hydrolase 51 family. Homohexamer; trimer of dimers.

Its subcellular location is the cytoplasm. It carries out the reaction Hydrolysis of terminal non-reducing alpha-L-arabinofuranoside residues in alpha-L-arabinosides.. The enzyme catalyses (20S)-ginsenoside Rc + H2O = L-arabinofuranose + (20S)-ginsenoside Rd. It participates in glycan metabolism; L-arabinan degradation. Its activity is regulated as follows. At a concentration of 5 mM, K(+), Cu(2+) and Ni(2+) exhibit inhibitory effects on the activity. Additionally, the chemical reagent SDS also displays a certain degree of inhibition. Enzymatic activity is largely unaffected by product feedback inhibition. In terms of biological role, involved in the degradation of arabinan and is a key enzyme in the complete degradation of the plant cell wall. Catalyzes the cleavage of terminal alpha-(1-&gt;5)-arabinofuranosyl bonds in different hemicellulosic homopolysaccharides (branched and debranched arabinans). It acts preferentially on arabinotriose, arabinobiose and linear alpha-(1-&gt;5)-L-arabinan, and is much less effective on branched sugar beet arabinan. When expressed in E.coli, the recombinant enyzme can hydrolyze, with relatively low catalytic efficiency, the terminal alpha-L-arabinofuranoside at the C20 position of ginsenoside Rc to produce ginsenoside Rd, a rare ginsenoside that exhibits diverse and powerful pharmacological activities. The chain is Intracellular exo-alpha-(1-&gt;5)-L-arabinofuranosidase 1 from Bacillus subtilis (strain 168).